Reading from the N-terminus, the 218-residue chain is Phosphoribosylformylglycinamidine synthase subunit PurQ (218 aa).

Positions 2 to 218 constitute a Glutamine amidotransferase type-1 domain; that stretch reads SIAVLRFPGT…GARMLRGLAC (217 aa). Cys86 (nucleophile) is an active-site residue. Catalysis depends on residues His195 and Glu197.

As to quaternary structure, part of the FGAM synthase complex composed of 1 PurL, 1 PurQ and 2 PurS subunits.

The protein localises to the cytoplasm. The catalysed reaction is N(2)-formyl-N(1)-(5-phospho-beta-D-ribosyl)glycinamide + L-glutamine + ATP + H2O = 2-formamido-N(1)-(5-O-phospho-beta-D-ribosyl)acetamidine + L-glutamate + ADP + phosphate + H(+). It catalyses the reaction L-glutamine + H2O = L-glutamate + NH4(+). It functions in the pathway purine metabolism; IMP biosynthesis via de novo pathway; 5-amino-1-(5-phospho-D-ribosyl)imidazole from N(2)-formyl-N(1)-(5-phospho-D-ribosyl)glycinamide: step 1/2. Its function is as follows. Part of the phosphoribosylformylglycinamidine synthase complex involved in the purines biosynthetic pathway. Catalyzes the ATP-dependent conversion of formylglycinamide ribonucleotide (FGAR) and glutamine to yield formylglycinamidine ribonucleotide (FGAM) and glutamate. The FGAM synthase complex is composed of three subunits. PurQ produces an ammonia molecule by converting glutamine to glutamate. PurL transfers the ammonia molecule to FGAR to form FGAM in an ATP-dependent manner. PurS interacts with PurQ and PurL and is thought to assist in the transfer of the ammonia molecule from PurQ to PurL. In Wolinella succinogenes (strain ATCC 29543 / DSM 1740 / CCUG 13145 / JCM 31913 / LMG 7466 / NCTC 11488 / FDC 602W) (Vibrio succinogenes), this protein is Phosphoribosylformylglycinamidine synthase subunit PurQ.